The following is a 179-amino-acid chain: Large ribosomal subunit protein uL5 (179 aa).

This sequence belongs to the universal ribosomal protein uL5 family. In terms of assembly, part of the 50S ribosomal subunit; part of the 5S rRNA/L5/L18/L25 subcomplex. Contacts the 5S rRNA and the P site tRNA. Forms a bridge to the 30S subunit in the 70S ribosome.

Functionally, this is one of the proteins that bind and probably mediate the attachment of the 5S RNA into the large ribosomal subunit, where it forms part of the central protuberance. In the 70S ribosome it contacts protein S13 of the 30S subunit (bridge B1b), connecting the 2 subunits; this bridge is implicated in subunit movement. Contacts the P site tRNA; the 5S rRNA and some of its associated proteins might help stabilize positioning of ribosome-bound tRNAs. The sequence is that of Large ribosomal subunit protein uL5 from Desulfatibacillum aliphaticivorans.